Reading from the N-terminus, the 401-residue chain is Phosphoglycerate kinase, cytosolic (401 aa).

Residues A24, D25, N27, R41, S63, H64, G66, R67, R122, H154, and R155 each contribute to the (2R)-3-phosphoglycerate site. Residue G200 coordinates ADP. G200 lines the CDP pocket. AMP-binding residues include K202 and K206. Residue K206 participates in ATP binding. Position 224 (G224) interacts with ADP. G224 is a binding site for CDP. Positions 225 and 297 each coordinate AMP. ATP is bound by residues G225 and G297. 2 residues coordinate CDP: G322 and F327. An ADP-binding site is contributed by F327. E328 contributes to the AMP binding site. Residues E328, D359, and S360 each contribute to the ATP site. Residue D359 coordinates Mg(2+).

The protein belongs to the phosphoglycerate kinase family. In terms of assembly, monomer. Mg(2+) is required as a cofactor.

Its subcellular location is the cytoplasm. It carries out the reaction (2R)-3-phosphoglycerate + ATP = (2R)-3-phospho-glyceroyl phosphate + ADP. It participates in carbohydrate degradation; glycolysis; pyruvate from D-glyceraldehyde 3-phosphate: step 2/5. The sequence is that of Phosphoglycerate kinase, cytosolic from Triticum aestivum (Wheat).